The sequence spans 253 residues: 5'-nucleotidase SurE (253 aa).

A divalent metal cation is bound by residues Asp8, Asp9, Ser39, and Asn95.

It belongs to the SurE nucleotidase family. A divalent metal cation is required as a cofactor.

Its subcellular location is the cytoplasm. The catalysed reaction is a ribonucleoside 5'-phosphate + H2O = a ribonucleoside + phosphate. Nucleotidase that shows phosphatase activity on nucleoside 5'-monophosphates. The sequence is that of 5'-nucleotidase SurE from Kosmotoga olearia (strain ATCC BAA-1733 / DSM 21960 / TBF 19.5.1).